A 64-amino-acid polypeptide reads, in one-letter code: Large ribosomal subunit protein bL28 (64 aa).

It belongs to the bacterial ribosomal protein bL28 family.

This Desulfotalea psychrophila (strain LSv54 / DSM 12343) protein is Large ribosomal subunit protein bL28.